Consider the following 257-residue polypeptide: Ribosome-inactivating protein charybdin (257 aa).

E167 is a catalytic residue. A disulfide bridge connects residues C217 and C254.

Belongs to the ribosome-inactivating protein family. Type 1 RIP subfamily.

The enzyme catalyses Endohydrolysis of the N-glycosidic bond at one specific adenosine on the 28S rRNA.. Functionally, inhibits translation in rabbit reticulocytes. This chain is Ribosome-inactivating protein charybdin, found in Drimia maritima (Sea squill).